The following is a 152-amino-acid chain: Small ribosomal subunit protein uS13 (152 aa).

This sequence belongs to the universal ribosomal protein uS13 family. In terms of assembly, part of the 30S ribosomal subunit. Forms a loose heterodimer with protein S19. Forms two bridges to the 50S subunit in the 70S ribosome.

Its function is as follows. Located at the top of the head of the 30S subunit, it contacts several helices of the 16S rRNA. In the 70S ribosome it contacts the 23S rRNA (bridge B1a) and protein L5 of the 50S subunit (bridge B1b), connecting the 2 subunits; these bridges are implicated in subunit movement. This is Small ribosomal subunit protein uS13 from Pyrobaculum aerophilum (strain ATCC 51768 / DSM 7523 / JCM 9630 / CIP 104966 / NBRC 100827 / IM2).